We begin with the raw amino-acid sequence, 362 residues long: Aminomethyltransferase (362 aa).

Belongs to the GcvT family. As to quaternary structure, the glycine cleavage system is composed of four proteins: P, T, L and H.

It catalyses the reaction N(6)-[(R)-S(8)-aminomethyldihydrolipoyl]-L-lysyl-[protein] + (6S)-5,6,7,8-tetrahydrofolate = N(6)-[(R)-dihydrolipoyl]-L-lysyl-[protein] + (6R)-5,10-methylene-5,6,7,8-tetrahydrofolate + NH4(+). Its function is as follows. The glycine cleavage system catalyzes the degradation of glycine. The protein is Aminomethyltransferase of Listeria monocytogenes serotype 4b (strain F2365).